Reading from the N-terminus, the 189-residue chain is Keratin-associated protein 5-2 (189 aa).

8 repeat units span residues 21 to 24 (CCKP), 27 to 30 (CCKP), 33 to 36 (CCVP), 134 to 137 (CCKP), 144 to 147 (CCKP), 159 to 162 (CCKP), 169 to 172 (CCKP), and 179 to 182 (CCAP). Residues 27–182 (CCKPVCCCVP…CCCQSSCCAP (156 aa)) form an 8 X 4 AA repeats of C-C-X-P region.

It belongs to the KRTAP type 5 family. As to quaternary structure, interacts with hair keratins.

Functionally, in the hair cortex, hair keratin intermediate filaments are embedded in an interfilamentous matrix, consisting of hair keratin-associated protein (KRTAP), which are essential for the formation of a rigid and resistant hair shaft through their extensive disulfide bond cross-linking with abundant cysteine residues of hair keratins. The matrix proteins include the high-sulfur and high-glycine-tyrosine keratins. This chain is Keratin-associated protein 5-2, found in Mus musculus (Mouse).